The following is a 125-amino-acid chain: Ribosome-binding factor A (125 aa).

It belongs to the RbfA family. In terms of assembly, monomer. Binds 30S ribosomal subunits, but not 50S ribosomal subunits or 70S ribosomes.

It localises to the cytoplasm. In terms of biological role, one of several proteins that assist in the late maturation steps of the functional core of the 30S ribosomal subunit. Associates with free 30S ribosomal subunits (but not with 30S subunits that are part of 70S ribosomes or polysomes). Required for efficient processing of 16S rRNA. May interact with the 5'-terminal helix region of 16S rRNA. This chain is Ribosome-binding factor A, found in Paracidovorax citrulli (strain AAC00-1) (Acidovorax citrulli).